We begin with the raw amino-acid sequence, 317 residues long: Acetyl-coenzyme A carboxylase carboxyl transferase subunit alpha (317 aa).

Positions 39 to 293 (RLQKKSNDLT…KAVLEKQLHE (255 aa)) constitute a CoA carboxyltransferase C-terminal domain.

The protein belongs to the AccA family. Acetyl-CoA carboxylase is a heterohexamer composed of biotin carboxyl carrier protein (AccB), biotin carboxylase (AccC) and two subunits each of ACCase subunit alpha (AccA) and ACCase subunit beta (AccD).

It localises to the cytoplasm. The catalysed reaction is N(6)-carboxybiotinyl-L-lysyl-[protein] + acetyl-CoA = N(6)-biotinyl-L-lysyl-[protein] + malonyl-CoA. The protein operates within lipid metabolism; malonyl-CoA biosynthesis; malonyl-CoA from acetyl-CoA: step 1/1. Its function is as follows. Component of the acetyl coenzyme A carboxylase (ACC) complex. First, biotin carboxylase catalyzes the carboxylation of biotin on its carrier protein (BCCP) and then the CO(2) group is transferred by the carboxyltransferase to acetyl-CoA to form malonyl-CoA. The polypeptide is Acetyl-coenzyme A carboxylase carboxyl transferase subunit alpha (Neisseria gonorrhoeae (strain NCCP11945)).